The primary structure comprises 1043 residues: MAGNDWVNSYLEAILDVGQGLDDARSSPSLLLRERGRFTPSRYFVEEVITGYDETDLHRSWVKAVATRSPQERNTRLENMCWRIWNLARQKKQHEEKEAQRLAKRRLEREKGRREATADMSEEFSEGEKGDIISDISTHGESTKPRLPRINSAESMELWASQQKGNKLYLVLISLHGLIRGENMELGRDSDTGGQVKYVVELARALGSMPGVYRVDLLTRQVSSPDVDYSYGEPTEMLTPRDSEDFSDEMGESSGAYIVRIPFGPKDKYIPKELLWPHIPEFVDGAMSHIMQMSNVLGEQVGVGKPIWPSAIHGHYADAGDATALLSGALNVPMLLTGHSLGRDKLEQLLRQGRLSKEEINSTYKIMRRIEGEELSLDVSEMVITSTRQEIDEQWRLYDGFDPILERKLRARIKRNVSCYGRFMPRMVKIPPGMEFNHIVPHGGDMEDTDGNEEHPTSPDPPIWAEIMRFFSNSRKPMILALARPDPKKNITTLVKAFGECRPLRELANLALIMGNRDGIDEMSSTSSSVLLSVLKLIDKYDLYGQVAYPKHHKQSDVPDIYRLAAKSKGVFINPAIIEPFGLTLIEAAAHGLPMVATKNGGPVDIHRVLDNGLLVDPHDQQSISEALLKLVADKHLWAKCRQNGLKNIHQFSWPEHCKTYLSRITSFKPRHPQWQSDDGGDNSEPESPSDSLRDIQDISLNLKFSFDGSGNDNYMNQEGSSMDRKSKIEAAVQNWSKGKDSRKMGSLERSEVNSGKFPAVRRRKFIVVIALDFDGEEDTLEATKRILDAVEKERAEGSVGFILSTSLTISEVQSFLVSGGLNPNDFDAFICNSGSDLHYTSLNNEDGPFVVDFYYHSHIEYRWGGEGLRKTLIRWASSLNEKKADNDEQIVTLAEHLSTDYCYTFTVKKPAAVPPVRELRKLLRIQALRCHVVYSQNGTRINVIPVLASRIQALRYLFVRWGIDMAKMAVFVGESGDTDYEGLLGGLHKSVVLKGVSCSACLHANRSYPLTDVISFESNNVVHASPDSDVRDALKKLELLKD.

The span at glutamate 95 to threonine 117 shows a compositional bias: basic and acidic residues. Residues glutamate 95–glycine 127 form a disordered region. 4 positions are modified to phosphoserine: serine 121, serine 125, serine 152, and serine 155. The tract at residues proline 670–leucine 693 is disordered.

This sequence belongs to the glycosyltransferase 1 family. In terms of assembly, homodimer or homotetramer. Post-translationally, phosphorylated at Ser-152 upon sucrose supply. In terms of tissue distribution, expressed in seeds, stems, rosette leaves, flowers and siliques. Highly expressed in maturing nectaries.

It carries out the reaction beta-D-fructose 6-phosphate + UDP-alpha-D-glucose = sucrose 6(F)-phosphate + UDP + H(+). The protein operates within glycan biosynthesis; sucrose biosynthesis; sucrose from D-fructose 6-phosphate and UDP-alpha-D-glucose: step 1/2. Its activity is regulated as follows. Activity is regulated by phosphorylation and moderated by concentration of metabolites and light. Functionally, plays a major role in photosynthetic sucrose synthesis by catalyzing the rate-limiting step of sucrose biosynthesis from UDP-glucose and fructose- 6-phosphate. Involved in the regulation of carbon partitioning in the leaves of plants. May regulate the synthesis of sucrose and therefore play a major role as a limiting factor in the export of photoassimilates out of the leaf. Plays a role for sucrose availability that is essential for plant growth and fiber elongation. Required for nectar secretion. The polypeptide is Sucrose-phosphate synthase 1 (SPS1) (Arabidopsis thaliana (Mouse-ear cress)).